The sequence spans 483 residues: Glutamyl-tRNA(Gln) amidotransferase subunit A (483 aa).

Residues K75 and S150 each act as charge relay system in the active site. S174 acts as the Acyl-ester intermediate in catalysis.

It belongs to the amidase family. GatA subfamily. Heterotrimer of A, B and C subunits.

It carries out the reaction L-glutamyl-tRNA(Gln) + L-glutamine + ATP + H2O = L-glutaminyl-tRNA(Gln) + L-glutamate + ADP + phosphate + H(+). Allows the formation of correctly charged Gln-tRNA(Gln) through the transamidation of misacylated Glu-tRNA(Gln) in organisms which lack glutaminyl-tRNA synthetase. The reaction takes place in the presence of glutamine and ATP through an activated gamma-phospho-Glu-tRNA(Gln). In Gloeothece citriformis (strain PCC 7424) (Cyanothece sp. (strain PCC 7424)), this protein is Glutamyl-tRNA(Gln) amidotransferase subunit A.